Reading from the N-terminus, the 438-residue chain is Trigger factor (438 aa).

Residues 160 to 245 (DDKVTIDFVG…VKKIQQAELP (86 aa)) form the PPIase FKBP-type domain.

It belongs to the FKBP-type PPIase family. Tig subfamily.

The protein resides in the cytoplasm. It catalyses the reaction [protein]-peptidylproline (omega=180) = [protein]-peptidylproline (omega=0). Its function is as follows. Involved in protein export. Acts as a chaperone by maintaining the newly synthesized protein in an open conformation. Functions as a peptidyl-prolyl cis-trans isomerase. The protein is Trigger factor of Francisella tularensis subsp. holarctica (strain LVS).